Consider the following 142-residue polypeptide: Small ribosomal subunit protein bS18m (142 aa).

It belongs to the bacterial ribosomal protein bS18 family. In terms of assembly, component of the mitochondrial small ribosomal subunit (mt-SSU). Mature mammalian 55S mitochondrial ribosomes consist of a small (28S) and a large (39S) subunit. The 28S small subunit contains a 12S ribosomal RNA (12S mt-rRNA) and 30 different proteins. The 39S large subunit contains a 16S rRNA (16S mt-rRNA), a copy of mitochondrial valine transfer RNA (mt-tRNA(Val)), which plays an integral structural role, and 52 different proteins. bS18m has a zinc binding site.

The protein localises to the mitochondrion. This is Small ribosomal subunit protein bS18m (MRPS18C) from Homo sapiens (Human).